We begin with the raw amino-acid sequence, 255 residues long: Type III pantothenate kinase (255 aa).

An ATP-binding site is contributed by 12 to 19 (DIGNSYTK). 109–112 (GDDL) is a binding site for substrate. Aspartate 111 (proton acceptor) is an active-site residue. An ATP-binding site is contributed by threonine 133. A substrate-binding site is contributed by threonine 185.

This sequence belongs to the type III pantothenate kinase family. In terms of assembly, homodimer. Requires NH4(+) as cofactor. K(+) serves as cofactor.

The protein resides in the cytoplasm. It carries out the reaction (R)-pantothenate + ATP = (R)-4'-phosphopantothenate + ADP + H(+). The protein operates within cofactor biosynthesis; coenzyme A biosynthesis; CoA from (R)-pantothenate: step 1/5. Functionally, catalyzes the phosphorylation of pantothenate (Pan), the first step in CoA biosynthesis. This is Type III pantothenate kinase from Malacoplasma penetrans (strain HF-2) (Mycoplasma penetrans).